We begin with the raw amino-acid sequence, 264 residues long: Tropinone reductase homolog At5g06060 (264 aa).

NADP(+) is bound at residue 15 to 39; sequence LVTGGTRGIGRAVVEELAKFGAKVH. Ser148 provides a ligand contact to substrate. The active-site Proton acceptor is Tyr161.

Belongs to the short-chain dehydrogenases/reductases (SDR) family. SDR65C subfamily.

The polypeptide is Tropinone reductase homolog At5g06060 (Arabidopsis thaliana (Mouse-ear cress)).